Here is a 355-residue protein sequence, read N- to C-terminus: MSGQPKRLMVMAGGTGGHVFPGLAVAHHLMAQGWQVRWLGTADRMEADLVPKHGIDIDFIRISGLRGKGVKALLAAPLRIFNAWRQARAIMKRFKPDVVLGMGGYVSGPGGLAAWSLGIPVVLHEQNGIAGLTNQWLAKIATTVMQAFPGAFPNAEVVGNPVRTDVLALPLPQVRLAGRDGPIRVLVVGGSQGARVLNQTMPQVAARLGDTVTIWHQSGKGVQHTVEQAYAGVGQPQHKVTEFIDDMAAAYAWADVVVCRSGALTVSEIAAAGLPAIFVPFQHKDRQQYWNALPLENAGAAKIFEQPQFTVEAVADTLAGWSREALLTMAERARAVSIPDATERVASEVSRVART.

Residues 15 to 17, Asn127, Arg163, Ser191, Ile244, 263 to 268, and Gln288 each bind UDP-N-acetyl-alpha-D-glucosamine; these read TGG and ALTVSE.

Belongs to the glycosyltransferase 28 family. MurG subfamily.

It is found in the cell inner membrane. The catalysed reaction is di-trans,octa-cis-undecaprenyl diphospho-N-acetyl-alpha-D-muramoyl-L-alanyl-D-glutamyl-meso-2,6-diaminopimeloyl-D-alanyl-D-alanine + UDP-N-acetyl-alpha-D-glucosamine = di-trans,octa-cis-undecaprenyl diphospho-[N-acetyl-alpha-D-glucosaminyl-(1-&gt;4)]-N-acetyl-alpha-D-muramoyl-L-alanyl-D-glutamyl-meso-2,6-diaminopimeloyl-D-alanyl-D-alanine + UDP + H(+). It functions in the pathway cell wall biogenesis; peptidoglycan biosynthesis. In terms of biological role, cell wall formation. Catalyzes the transfer of a GlcNAc subunit on undecaprenyl-pyrophosphoryl-MurNAc-pentapeptide (lipid intermediate I) to form undecaprenyl-pyrophosphoryl-MurNAc-(pentapeptide)GlcNAc (lipid intermediate II). The protein is UDP-N-acetylglucosamine--N-acetylmuramyl-(pentapeptide) pyrophosphoryl-undecaprenol N-acetylglucosamine transferase of Salmonella gallinarum (strain 287/91 / NCTC 13346).